We begin with the raw amino-acid sequence, 182 residues long: Peptidyl-prolyl cis-trans isomerase H (182 aa).

Residues 15–181 (FFDITIGGEP…LDVVISQCGE (167 aa)) form the PPIase cyclophilin-type domain.

Belongs to the cyclophilin-type PPIase family. PPIase H subfamily.

The protein localises to the nucleus. The enzyme catalyses [protein]-peptidylproline (omega=180) = [protein]-peptidylproline (omega=0). Its function is as follows. PPIases accelerate the folding of proteins. It catalyzes the cis-trans isomerization of proline imidic peptide bonds in oligopeptides. The chain is Peptidyl-prolyl cis-trans isomerase H (CYP3) from Gibberella zeae (strain ATCC MYA-4620 / CBS 123657 / FGSC 9075 / NRRL 31084 / PH-1) (Wheat head blight fungus).